Here is a 236-residue protein sequence, read N- to C-terminus: UPF0173 metal-dependent hydrolase DSY1309 (236 aa).

Belongs to the UPF0173 family.

This chain is UPF0173 metal-dependent hydrolase DSY1309, found in Desulfitobacterium hafniense (strain Y51).